The sequence spans 726 residues: MSTSDDIHNTTATGKCPFHQGGHDQSAGAGTTTRDWWPNQLRVDLLNQHSNRSNPLGEDFDYRKEFSKLDYYGLKKDLKALLTESQPWWPADWGSYAGLFIRMAWHGAGTYRSIDGRGGAGRGQQRFAPLNSWPDNVSLDKARRLLWPIKQKYGQKISWADLFILAGNVALENSGFRTFGFGAGREDVWEPDLDVNWGDEKAWLTHRHPEALAKAPLGATEMGLIYVNPEGPDHSGEPLSAAAAIRATFGNMGMNDEETVALIAGGHTLGKTHGAGPTSNVGPDPEAAPIEEQGLGWASTYGSGVGADAITSGLEVVWTQTPTQWSNYFFENLFKYEWVQTRSPAGAIQFEAVDAPEIIPDPFDPSKKRKPTMLVTDLTLRFDPEFEKISRRFLNDPQAFNEAFARAWFKLTHRDMGPKSRYIGPEVPKEDLIWQDPLPQPIYNPTEQDIIDLKFAIADSGLSVSERVSVAWASASTFRGGDKRGGANGARLALMPQRDWDVNAAAVRALPVLEKIQKESGKASLADIIVLAGVVGVEKAASAAGLSIHVPFAPGRVDARQDQTDIEMFELLEPIADGFRNYRARLDVSTTESLLIDKAQQLTLTAPEMTALVGGMRVLGANFDGSKNGVFTDRVGVLSNDFFVNLLDMRYEWKATDESKELFEGRDRETGEVKYTASRADLVFGSNSVLRAVAEVYASSDAHEKFVKDFVAAWVKVMNLDRFDLL.

The disordered stretch occupies residues M1–T33. Positions W105–Y226 form a cross-link, tryptophyl-tyrosyl-methioninium (Trp-Tyr) (with M-252). H106 (proton acceptor) is an active-site residue. The tryptophyl-tyrosyl-methioninium (Tyr-Met) (with W-105) cross-link spans Y226–M252. H267 is a binding site for heme b.

The protein belongs to the peroxidase family. Peroxidase/catalase subfamily. In terms of assembly, homodimer or homotetramer. It depends on heme b as a cofactor. In terms of processing, formation of the three residue Trp-Tyr-Met cross-link is important for the catalase, but not the peroxidase activity of the enzyme.

It carries out the reaction H2O2 + AH2 = A + 2 H2O. The enzyme catalyses 2 H2O2 = O2 + 2 H2O. Bifunctional enzyme with both catalase and broad-spectrum peroxidase activity. The chain is Catalase-peroxidase from Shigella sonnei (strain Ss046).